The sequence spans 291 residues: Quinol oxidase subunit 2 (291 aa).

The first 28 residues, 1 to 28 (MQLKKAFWKLASLLPLSLLLFLGGCDKK), serve as a signal peptide directing secretion. 2 helical membrane passes run 49–69 (SFLL…VILI) and 91–111 (LEII…IPTV).

It belongs to the cytochrome c oxidase subunit 2 family.

Its subcellular location is the cell membrane. It carries out the reaction 2 a quinol + O2 = 2 a quinone + 2 H2O. Catalyzes quinol oxidation with the concomitant reduction of oxygen to water. Subunit II transfers the electrons from a quinol to the binuclear center of the catalytic subunit I. The chain is Quinol oxidase subunit 2 from Bacillus cereus (strain ATCC 14579 / DSM 31 / CCUG 7414 / JCM 2152 / NBRC 15305 / NCIMB 9373 / NCTC 2599 / NRRL B-3711).